A 95-amino-acid polypeptide reads, in one-letter code: Protein TusB (95 aa).

The protein belongs to the DsrH/TusB family. Heterohexamer, formed by a dimer of trimers. The hexameric TusBCD complex contains 2 copies each of TusB, TusC and TusD. The TusBCD complex interacts with TusE.

The protein resides in the cytoplasm. Its function is as follows. Part of a sulfur-relay system required for 2-thiolation of 5-methylaminomethyl-2-thiouridine (mnm(5)s(2)U) at tRNA wobble positions. This is Protein TusB from Sodalis glossinidius (strain morsitans).